Here is a 452-residue protein sequence, read N- to C-terminus: Friend leukemia integration 1 transcription factor (452 aa).

Ser-39 carries the post-translational modification Phosphoserine. One can recognise a PNT domain in the interval 112–198 (PPPPNMTTNE…SHLSYLRESS (87 aa)). A disordered region spans residues 209 to 271 (DQSSRLSVKE…PYQILGPTSS (63 aa)). The span at 215-226 (SVKEDPSYDSVR) shows a compositional bias: basic and acidic residues. The span at 248–257 (QTISKNTEQR) shows a compositional bias: polar residues. Positions 281–361 (IQLWQFLLEL…HGKRYAYKFD (81 aa)) form a DNA-binding region, ETS. The tract at residues 433-452 (NPNVPRHPNTHVPSHLGSYY) is disordered.

Belongs to the ETS family. Can form homodimers or heterodimers with ETV6/TEL1.

It is found in the nucleus. Sequence-specific transcriptional activator. Recognizes the DNA sequence 5'-C[CA]GGAAGT-3'. The protein is Friend leukemia integration 1 transcription factor (FLI1) of Homo sapiens (Human).